The following is a 31-amino-acid chain: Cytochrome b6-f complex subunit 6 (31 aa).

Residues 4-26 (LTSYFGFLLAASTITPALFIGLN) traverse the membrane as a helical segment.

Belongs to the PetL family. As to quaternary structure, the 4 large subunits of the cytochrome b6-f complex are cytochrome b6, subunit IV (17 kDa polypeptide, PetD), cytochrome f and the Rieske protein, while the 4 small subunits are PetG, PetL, PetM and PetN. The complex functions as a dimer.

It is found in the plastid. The protein resides in the chloroplast thylakoid membrane. Functionally, component of the cytochrome b6-f complex, which mediates electron transfer between photosystem II (PSII) and photosystem I (PSI), cyclic electron flow around PSI, and state transitions. PetL is important for photoautotrophic growth as well as for electron transfer efficiency and stability of the cytochrome b6-f complex. In Phalaenopsis aphrodite subsp. formosana (Moth orchid), this protein is Cytochrome b6-f complex subunit 6.